The primary structure comprises 369 residues: DNA replication and repair protein RecF (369 aa).

30 to 37 (GDNAQGKT) serves as a coordination point for ATP.

The protein belongs to the RecF family.

The protein resides in the cytoplasm. Its function is as follows. The RecF protein is involved in DNA metabolism; it is required for DNA replication and normal SOS inducibility. RecF binds preferentially to single-stranded, linear DNA. It also seems to bind ATP. The polypeptide is DNA replication and repair protein RecF (Streptococcus equi subsp. zooepidemicus (strain H70)).